The following is a 505-amino-acid chain: Histidine ammonia-lyase (505 aa).

A cross-link (5-imidazolinone (Ala-Gly)) is located at residues 141–143; that stretch reads ASG. Serine 142 is modified (2,3-didehydroalanine (Ser)).

It belongs to the PAL/histidase family. Contains an active site 4-methylidene-imidazol-5-one (MIO), which is formed autocatalytically by cyclization and dehydration of residues Ala-Ser-Gly.

The protein localises to the cytoplasm. It carries out the reaction L-histidine = trans-urocanate + NH4(+). It functions in the pathway amino-acid degradation; L-histidine degradation into L-glutamate; N-formimidoyl-L-glutamate from L-histidine: step 1/3. This Bacillus anthracis protein is Histidine ammonia-lyase.